The primary structure comprises 341 residues: L-threonine 3-dehydrogenase (341 aa).

C38 contacts Zn(2+). Catalysis depends on charge relay system residues T40 and H43. The Zn(2+) site is built by H63, E64, C93, C96, C99, and C107. Residues I175, D195, R200, 262–264 (LGI), and 286–287 (IY) each bind NAD(+).

Belongs to the zinc-containing alcohol dehydrogenase family. Homotetramer. Requires Zn(2+) as cofactor.

The protein localises to the cytoplasm. It catalyses the reaction L-threonine + NAD(+) = (2S)-2-amino-3-oxobutanoate + NADH + H(+). It participates in amino-acid degradation; L-threonine degradation via oxydo-reductase pathway; glycine from L-threonine: step 1/2. Its function is as follows. Catalyzes the NAD(+)-dependent oxidation of L-threonine to 2-amino-3-ketobutyrate. The sequence is that of L-threonine 3-dehydrogenase from Escherichia coli O157:H7.